We begin with the raw amino-acid sequence, 344 residues long: UDP-glucose 4-epimerase (344 aa).

Residues 15 to 17 (GYI), 36 to 40 (DNLSN), 63 to 64 (DI), Phe-85, and Lys-89 contribute to the NAD(+) site. Residue 129–131 (SAT) participates in substrate binding. The active-site Proton acceptor is Tyr-153. NAD(+) is bound by residues Lys-157 and Tyr-181. Substrate contacts are provided by residues 181 to 183 (YFN), 202 to 204 (NNL), 220 to 222 (SIF), Arg-235, and 297 to 300 (RKGD).

This sequence belongs to the NAD(P)-dependent epimerase/dehydratase family. Homodimer. The cofactor is NAD(+).

The enzyme catalyses UDP-alpha-D-glucose = UDP-alpha-D-galactose. The catalysed reaction is UDP-N-acetyl-alpha-D-glucosamine = UDP-N-acetyl-alpha-D-galactosamine. It participates in carbohydrate metabolism; galactose metabolism. Catalyzes two distinct but analogous reactions: the reversible epimerization of UDP-glucose to UDP-galactose and the reversible epimerization of UDP-N-acetylglucosamine to UDP-N-acetylgalactosamine. The reaction with UDP-Gal plays a critical role in the Leloir pathway of galactose catabolism in which galactose is converted to the glycolytic intermediate glucose 6-phosphate. It contributes to the catabolism of dietary galactose and enables the endogenous biosynthesis of both UDP-Gal and UDP-GalNAc when exogenous sources are limited. Both UDP-sugar interconversions are important in the synthesis of glycoproteins and glycolipids. The protein is UDP-glucose 4-epimerase (galE) of Dictyostelium discoideum (Social amoeba).